A 309-amino-acid chain; its full sequence is Protein FdhE homolog (309 aa).

The protein belongs to the FdhE family.

It is found in the cytoplasm. In terms of biological role, necessary for formate dehydrogenase activity. The sequence is that of Protein FdhE homolog from Yersinia pestis bv. Antiqua (strain Antiqua).